The sequence spans 513 residues: Histidine ammonia-lyase (513 aa).

The 5-imidazolinone (Ala-Gly) cross-link spans 146–148; sequence ASG. Ser147 carries the 2,3-didehydroalanine (Ser) modification.

The protein belongs to the PAL/histidase family. Post-translationally, contains an active site 4-methylidene-imidazol-5-one (MIO), which is formed autocatalytically by cyclization and dehydration of residues Ala-Ser-Gly.

The protein localises to the cytoplasm. The enzyme catalyses L-histidine = trans-urocanate + NH4(+). It functions in the pathway amino-acid degradation; L-histidine degradation into L-glutamate; N-formimidoyl-L-glutamate from L-histidine: step 1/3. This Shewanella oneidensis (strain ATCC 700550 / JCM 31522 / CIP 106686 / LMG 19005 / NCIMB 14063 / MR-1) protein is Histidine ammonia-lyase.